The chain runs to 429 residues: Na(+)/H(+) antiporter NhaA 1 (429 aa).

12 helical membrane passes run 32–52 (ISGGLLLAATVLALGWANSPW), 73–93 (LSVQQWAADGLLAIFFFVAGL), 111–131 (VVPVAAAAGGVAVPAVLYSLL), 140–160 (GWAIPTATDIAFALSVLAVVG), 170–190 (FLLTLAVVDDLLAIVIIAVAY), 193–213 (ELSVVPLVAAVVPLAAFTLLV), 219–239 (AWWLLLPLAVLTWALVHASGV), 243–263 (VAGVLLAFAVPVLRSEGAGGP), 284–304 (VAVPVFAFCSAGVTVGGLGGL), 316–336 (VVVGLVVGKAIGIFTTTWLVA), 349–369 (WVDVAGLALLGGVGFTVSLLI), and 383–403 (HVKVGVLTASVTAALLATVVL).

It belongs to the NhaA Na(+)/H(+) (TC 2.A.33) antiporter family.

The protein localises to the cell membrane. It catalyses the reaction Na(+)(in) + 2 H(+)(out) = Na(+)(out) + 2 H(+)(in). Na(+)/H(+) antiporter that extrudes sodium in exchange for external protons. The protein is Na(+)/H(+) antiporter NhaA 1 of Frankia alni (strain DSM 45986 / CECT 9034 / ACN14a).